The following is a 2731-amino-acid chain: Teneurin-m (2731 aa).

Disordered stretches follow at residues 1-60 (MNPY…QNQQ) and 103-136 (LLEG…NNPN). Topologically, residues 1-229 (MNPYEYESTL…RKDLVARCSS (229 aa)) are cytoplasmic. Residues 110 to 119 (TAPPDVPPRN) are compositionally biased toward pro residues. The span at 120 to 136 (PTMSRMQNGRLTVNNPN) shows a compositional bias: polar residues. The chain crosses the membrane as a helical span at residues 230–250 (PWFGIGSISVLFAFVVMLILL). The Extracellular portion of the chain corresponds to 251–2731 (TTTGVIKWNQ…RQLKFGELSA (2481 aa)). The segment at 321–387 (SSAATVTTAT…RTFPARSFPP (67 aa)) is disordered. A compositionally biased stretch (low complexity) spans 322 to 370 (SAATVTTATSNSGTAQGLQSTSASAEATSSAATSSSQSSLTPSLSSSLA). EGF-like domains are found at residues 536–572 (GGDD…KECS), 574–606 (RHDE…KFCE), 643–676 (DALQ…DDCS), and 738–774 (TIEG…PDCG). 11 cysteine pairs are disulfide-bonded: C540/C549, C545/C560, C562/C571, C578/C589, C583/C594, C596/C605, C651/C664, C666/C675, C742/C752, C746/C762, and C764/C773. N857 carries an N-linked (GlcNAc...) asparagine glycan. 4 NHL repeats span residues 1160–1201 (ECPD…IMTD), 1202–1246 (GSIR…VRDT), 1391–1434 (STAY…VRVI), and 1459–1502 (CFEA…VMSS). Residues 1618–1652 (TGLLRTKLDSTGRSYVYNYDEFGRLTSAVTPTGRV) form a YD repeat. Positions 2691–2731 (LADDPGNVAFQRDAKRKRRKTGSSHRSASNRRQLKFGELSA) are disordered. Residues 2704-2724 (AKRKRRKTGSSHRSASNRRQL) show a composition bias toward basic residues.

It belongs to the tenascin family. Teneurin subfamily. Homodimer. Heterodimer with Ten-a. Interacts with Ten-a; the interaction occurs at the neuromuscular junction. Interacts with alpha-Spec and cher. Post-translationally, phosphorylated. Phosphorylation occurs at tyrosine residues. In terms of processing, proteolytically cleaved. As to expression, expressed in muscles and motor neurons (at protein level).

The protein localises to the cytoplasm. It is found in the postsynaptic cell membrane. The protein resides in the synapse. It localises to the synaptosome. Its subcellular location is the membrane. In terms of biological role, involved in neural development, regulating the establishment of proper connectivity within the nervous system. Acts as a homophilic and heterophilic synaptic cell adhesion molecule that drives synapse assembly. Promotes bi-directional trans-synaptic signaling with Ten-a to organize neuromuscular synapses. Functions in olfactory synaptic partner matching by promoting homophilic cell adhesion between pre-synaptic olfactory receptor neurons (ORN) axons and post-synaptic projection neurons (PN) dendrites partner in the developing antennal lobe to form stable connections. Also required for peripheral axon growth cone guidance and target recognition of motor neurons. This Drosophila melanogaster (Fruit fly) protein is Teneurin-m (Ten-m).